Reading from the N-terminus, the 346-residue chain is Selenide, water dikinase (346 aa).

The active site involves U16. U16 is a non-standard amino acid (selenocysteine). ATP contacts are provided by residues K19 and 47–49 (TAD). Residue D50 coordinates Mg(2+). ATP-binding positions include D67, D90, and 138 to 140 (GHS). D90 lines the Mg(2+) pocket. D226 lines the Mg(2+) pocket.

Belongs to the selenophosphate synthase 1 family. Class I subfamily. In terms of assembly, homodimer. The cofactor is Mg(2+).

It catalyses the reaction hydrogenselenide + ATP + H2O = selenophosphate + AMP + phosphate + 2 H(+). In terms of biological role, synthesizes selenophosphate from selenide and ATP. The chain is Selenide, water dikinase from Haemophilus influenzae (strain ATCC 51907 / DSM 11121 / KW20 / Rd).